The following is a 191-amino-acid chain: MAAYSYRPGPGGGPGPAAGAALPDQSFLWNVFQRVDKDRSGVISDNELQQALSNGTWTPFNPVTVRSIISMFDRENKAGVNFSEFTGVWKYITDWQNVFRTYDRDNSGMIDKNELKQALSGFGYRLSDQFHDILIRKFDRQGRGQIAFDDFIQGCIVLQRLTDIFRRYDTDQDGWIQVSYEQYLSMVFSIV.

N-acetylalanine is present on Ala2. EF-hand domains are found at residues 23–58, 59–89, 90–125, 126–161, and 162–191; these read PDQSFLWNVFQRVDKDRSGVISDNELQQALSNGTWT, PFNPVTVRSIISMFDRENKAGVNFSEFTGVW, KYITDWQNVFRTYDRDNSGMIDKNELKQALSGFGYR, LSDQFHDILIRKFDRQGRGQIAFDDFIQGCIVLQRL, and TDIFRRYDTDQDGWIQVSYEQYLSMVFSIV. Positions 36, 38, 40, 42, and 47 each coordinate Ca(2+). Positions 103, 105, 107, 109, and 114 each coordinate Ca(2+). 4 residues coordinate Mg(2+): Asp169, Asp171, Asp173, and Trp175.

As to quaternary structure, homodimer and heterodimer; heterodimerizes (via the EF-hand 5) with PEF1. Isoform 1 and isoform 2 self-associate; probably forming homodimers. Interacts with CPNE4 (via VWFA domain). Interacts with PDCD6IP; the interaction is calcium-dependent. Interacts with RBM22. Interacts with PLSCR4. Interacts with ANXA7 and TSG101. Interacts with DAPK1. Interacts with SEC31A; the interaction is calcium-dependent and promotes monoubiquitination of SEC31A. Interacts with ANXA11 (via N-terminus); the interaction is calcium-dependent. Interacts with PLSCR3 (via N-terminus); the interaction is calcium-dependent. Interacts with MCOLN1; the interaction is calcium-dependent. Interacts with KDR; the interaction is calcium-dependent. Interacts with HEBP2; the interaction is calcium-dependent. Interacts with TFG. Isoform 1: Interacts with SHISA5, leading to stabilize it. Isoform 2: Does not interact with SHISA5. Isoform 2: Does not interact with PDCD6IP, TSG101, ANXA7 and ANXA11.

The protein resides in the endoplasmic reticulum membrane. Its subcellular location is the cytoplasmic vesicle. It localises to the COPII-coated vesicle membrane. It is found in the cytoplasm. The protein localises to the nucleus. The protein resides in the endosome. In terms of biological role, calcium sensor that plays a key role in processes such as endoplasmic reticulum (ER)-Golgi vesicular transport, endosomal biogenesis or membrane repair. Acts as an adapter that bridges unrelated proteins or stabilizes weak protein-protein complexes in response to calcium: calcium-binding triggers exposure of apolar surface, promoting interaction with different sets of proteins thanks to 3 different hydrophobic pockets, leading to translocation to membranes. Involved in ER-Golgi transport by promoting the association between PDCD6IP and TSG101, thereby bridging together the ESCRT-III and ESCRT-I complexes. Together with PEF1, acts as a calcium-dependent adapter for the BCR(KLHL12) complex, a complex involved in ER-Golgi transport by regulating the size of COPII coats. In response to cytosolic calcium increase, the heterodimer formed with PEF1 interacts with, and bridges together the BCR(KLHL12) complex and SEC31 (SEC31A or SEC31B), promoting monoubiquitination of SEC31 and subsequent collagen export, which is required for neural crest specification. Involved in the regulation of the distribution and function of MCOLN1 in the endosomal pathway. Promotes localization and polymerization of TFG at endoplasmic reticulum exit site. Required for T-cell receptor-, Fas-, and glucocorticoid-induced apoptosis. May mediate Ca(2+)-regulated signals along the death pathway: interaction with DAPK1 can accelerate apoptotic cell death by increasing caspase-3 activity. Its role in apoptosis may however be indirect, as suggested by knockout experiments. May inhibit KDR/VEGFR2-dependent angiogenesis; the function involves inhibition of VEGF-induced phosphorylation of the Akt signaling pathway. Has a lower Ca(2+) affinity than isoform 1. The protein is Programmed cell death protein 6 (Pdcd6) of Mus musculus (Mouse).